The primary structure comprises 433 residues: Steroid C26-monooxygenase (433 aa).

Gly-202 serves as a coordination point for substrate. A heme-binding site is contributed by Cys-377.

This sequence belongs to the cytochrome P450 family. Requires heme as cofactor.

It catalyses the reaction cholest-4-en-3-one + 6 reduced [2Fe-2S]-[ferredoxin] + 3 O2 + 5 H(+) = (25S)-3-oxocholest-4-en-26-oate + 6 oxidized [2Fe-2S]-[ferredoxin] + 4 H2O. Its pathway is steroid metabolism; cholesterol degradation. Functionally, involved in the utilization of cholesterol as the sole carbon and energy source by degrading the side chain during infection. Primarily catalyzes the sequential oxidation of the terminal methyl of cholest-4-en-3-one into (25S)-26-hydroxycholest-4-en-3-one (alcohol), (25S)-26-oxocholest-4-en-3-one (aldehyde), to finally yield the carboxylic acid (25S)-3-oxocholest-4-en-26-oate. Also able to sequentially oxidize cholesterol itself, not only cholest-4-en-3-one. This is Steroid C26-monooxygenase (cyp125) from Mycobacterium bovis (strain ATCC BAA-935 / AF2122/97).